The following is a 373-amino-acid chain: Peptide chain release factor 2 (373 aa).

Position 251 is an N5-methylglutamine (Gln-251).

This sequence belongs to the prokaryotic/mitochondrial release factor family. Post-translationally, methylated by PrmC. Methylation increases the termination efficiency of RF2.

It is found in the cytoplasm. In terms of biological role, peptide chain release factor 2 directs the termination of translation in response to the peptide chain termination codons UGA and UAA. The chain is Peptide chain release factor 2 from Salinispora tropica (strain ATCC BAA-916 / DSM 44818 / JCM 13857 / NBRC 105044 / CNB-440).